The sequence spans 194 residues: PRELI domain containing protein 3B (194 aa).

In terms of domain architecture, PRELI/MSF1 spans 1–172; it reads MKIWTSEHVF…VIHKLNAEIE (172 aa). Phosphoserine is present on residues serine 46 and serine 51.

It belongs to the slowmo family.

The sequence is that of PRELI domain containing protein 3B (PRELID3B) from Macaca fascicularis (Crab-eating macaque).